The chain runs to 480 residues: Glycogen synthase (480 aa).

Lys15 contacts ADP-alpha-D-glucose.

The protein belongs to the glycosyltransferase 1 family. Bacterial/plant glycogen synthase subfamily.

The enzyme catalyses [(1-&gt;4)-alpha-D-glucosyl](n) + ADP-alpha-D-glucose = [(1-&gt;4)-alpha-D-glucosyl](n+1) + ADP + H(+). Its pathway is glycan biosynthesis; glycogen biosynthesis. In terms of biological role, synthesizes alpha-1,4-glucan chains using ADP-glucose. The sequence is that of Glycogen synthase from Desulforamulus reducens (strain ATCC BAA-1160 / DSM 100696 / MI-1) (Desulfotomaculum reducens).